A 211-amino-acid chain; its full sequence is Uracil phosphoribosyltransferase (211 aa).

5-phospho-alpha-D-ribose 1-diphosphate is bound by residues R79, R104, and 131 to 139 (DPMLATGGS). Uracil-binding positions include I196 and 201–203 (GDA). Residue D202 coordinates 5-phospho-alpha-D-ribose 1-diphosphate.

Belongs to the UPRTase family. The cofactor is Mg(2+).

It carries out the reaction UMP + diphosphate = 5-phospho-alpha-D-ribose 1-diphosphate + uracil. It functions in the pathway pyrimidine metabolism; UMP biosynthesis via salvage pathway; UMP from uracil: step 1/1. Allosterically activated by GTP. Its function is as follows. Catalyzes the conversion of uracil and 5-phospho-alpha-D-ribose 1-diphosphate (PRPP) to UMP and diphosphate. This is Uracil phosphoribosyltransferase from Lactococcus lactis subsp. lactis (strain IL1403) (Streptococcus lactis).